The chain runs to 430 residues: Glutamyl-tRNA reductase (430 aa).

Residues 50–53 (TCNR), S108, 113–115 (EPQ), and Q119 each bind substrate. Residue C51 is the Nucleophile of the active site. Residue 188–193 (GAGEMA) participates in NADP(+) binding.

Belongs to the glutamyl-tRNA reductase family. In terms of assembly, homodimer.

The enzyme catalyses (S)-4-amino-5-oxopentanoate + tRNA(Glu) + NADP(+) = L-glutamyl-tRNA(Glu) + NADPH + H(+). The protein operates within porphyrin-containing compound metabolism; protoporphyrin-IX biosynthesis; 5-aminolevulinate from L-glutamyl-tRNA(Glu): step 1/2. Its function is as follows. Catalyzes the NADPH-dependent reduction of glutamyl-tRNA(Glu) to glutamate 1-semialdehyde (GSA). The chain is Glutamyl-tRNA reductase from Desulfovibrio desulfuricans (strain ATCC 27774 / DSM 6949 / MB).